The chain runs to 266 residues: Undecaprenyl-diphosphatase (266 aa).

8 consecutive transmembrane segments (helical) span residues 1 to 21 (MDIF…FLPI), 39 to 59 (QGLT…VIYF), 87 to 107 (WWII…KDFI), 114 to 134 (IEVI…ADKL), 144 to 164 (VGWK…IPGT), 184 to 204 (AARF…ILVV), 218 to 238 (ALVL…HYFL), and 246 to 266 (MTPF…VIFA).

It belongs to the UppP family.

It localises to the cell inner membrane. It catalyses the reaction di-trans,octa-cis-undecaprenyl diphosphate + H2O = di-trans,octa-cis-undecaprenyl phosphate + phosphate + H(+). Its function is as follows. Catalyzes the dephosphorylation of undecaprenyl diphosphate (UPP). Confers resistance to bacitracin. This is Undecaprenyl-diphosphatase from Shewanella loihica (strain ATCC BAA-1088 / PV-4).